The chain runs to 246 residues: Ribosome maturation factor RimM (246 aa).

The span at 1–15 shows a compositional bias: basic and acidic residues; that stretch reads MKRKQESKGAGEKRQ. The interval 1–63 is disordered; the sequence is MKRKQESKGA…NPQFTTPNPD (63 aa). A compositionally biased stretch (pro residues) spans 45–54; sequence VPSPQSPIPN. One can recognise a PRC barrel domain in the interval 158-239; that stretch reads GEDEYHVVDL…RIEITPPPGL (82 aa).

Belongs to the RimM family. In terms of assembly, binds ribosomal protein uS19.

The protein resides in the cytoplasm. In terms of biological role, an accessory protein needed during the final step in the assembly of 30S ribosomal subunit, possibly for assembly of the head region. Essential for efficient processing of 16S rRNA. May be needed both before and after RbfA during the maturation of 16S rRNA. It has affinity for free ribosomal 30S subunits but not for 70S ribosomes. This is Ribosome maturation factor RimM from Nostoc sp. (strain PCC 7120 / SAG 25.82 / UTEX 2576).